Here is a 335-residue protein sequence, read N- to C-terminus: Lipoyl synthase (335 aa).

Residues 1–13 (MTIDTNPESSTPS) are compositionally biased toward polar residues. Positions 1 to 29 (MTIDTNPESSTPSAPAYNPSEKQKGSAKT) are disordered. [4Fe-4S] cluster contacts are provided by Cys75, Cys80, Cys86, Cys101, Cys105, Cys108, and Ser315. A Radical SAM core domain is found at 86-304 (CFGKGTATFM…EEEAYKMGFA (219 aa)).

Belongs to the radical SAM superfamily. Lipoyl synthase family. It depends on [4Fe-4S] cluster as a cofactor.

It localises to the cytoplasm. It catalyses the reaction [[Fe-S] cluster scaffold protein carrying a second [4Fe-4S](2+) cluster] + N(6)-octanoyl-L-lysyl-[protein] + 2 oxidized [2Fe-2S]-[ferredoxin] + 2 S-adenosyl-L-methionine + 4 H(+) = [[Fe-S] cluster scaffold protein] + N(6)-[(R)-dihydrolipoyl]-L-lysyl-[protein] + 4 Fe(3+) + 2 hydrogen sulfide + 2 5'-deoxyadenosine + 2 L-methionine + 2 reduced [2Fe-2S]-[ferredoxin]. The protein operates within protein modification; protein lipoylation via endogenous pathway; protein N(6)-(lipoyl)lysine from octanoyl-[acyl-carrier-protein]: step 2/2. Its function is as follows. Catalyzes the radical-mediated insertion of two sulfur atoms into the C-6 and C-8 positions of the octanoyl moiety bound to the lipoyl domains of lipoate-dependent enzymes, thereby converting the octanoylated domains into lipoylated derivatives. This chain is Lipoyl synthase, found in Herminiimonas arsenicoxydans.